Reading from the N-terminus, the 268-residue chain is tRNA threonylcarbamoyladenosine dehydratase (268 aa).

A helical membrane pass occupies residues 237–257; that stretch reads GFGAATMVTATFGFVAVSHAL.

This sequence belongs to the HesA/MoeB/ThiF family. Interacts with CsdE.

It is found in the membrane. Its function is as follows. Catalyzes the ATP-dependent dehydration of threonylcarbamoyladenosine at position 37 (t(6)A37) to form cyclic t(6)A37 (ct(6)A37) in tRNAs that read codons beginning with adenine. TcdA is also part of a sulfur transfer pathway; is able to accept sulfur from CsdA directly in vitro, but CsdE might act as the sulfur donor in vivo. The chain is tRNA threonylcarbamoyladenosine dehydratase (tcdA) from Escherichia coli (strain K12).